The chain runs to 64 residues: Large ribosomal subunit protein bL35 (64 aa).

Residues 1-28 are compositionally biased toward basic residues; that stretch reads MPKMKTKSGAAKRFKKTAGGLKHKHAFK. The interval 1–64 is disordered; the sequence is MPKMKTKSGA…ARVERSLRLR (64 aa). Residues 53 to 64 are compositionally biased toward basic and acidic residues; that stretch reads DVARVERSLRLR.

Belongs to the bacterial ribosomal protein bL35 family.

In Pseudomonas aeruginosa (strain LESB58), this protein is Large ribosomal subunit protein bL35.